Here is a 24-residue protein sequence, read N- to C-terminus: uncharacterized protein (24 aa).

Residues 1–3 lie on the Cytoplasmic side of the membrane; the sequence is MKK. A helical transmembrane segment spans residues 4–24; sequence TTIIMMGVAIIVVLGTELGWW.

It is found in the cell inner membrane. This is an uncharacterized protein from Escherichia coli (strain K12).